Consider the following 498-residue polypeptide: ATP synthase subunit beta, chloroplastic (498 aa).

172–179 (GGAGVGKT) contacts ATP.

This sequence belongs to the ATPase alpha/beta chains family. F-type ATPases have 2 components, CF(1) - the catalytic core - and CF(0) - the membrane proton channel. CF(1) has five subunits: alpha(3), beta(3), gamma(1), delta(1), epsilon(1). CF(0) has four main subunits: a(1), b(1), b'(1) and c(9-12).

Its subcellular location is the plastid. It is found in the chloroplast thylakoid membrane. The catalysed reaction is ATP + H2O + 4 H(+)(in) = ADP + phosphate + 5 H(+)(out). Its function is as follows. Produces ATP from ADP in the presence of a proton gradient across the membrane. The catalytic sites are hosted primarily by the beta subunits. This chain is ATP synthase subunit beta, chloroplastic, found in Phalaenopsis aphrodite subsp. formosana (Moth orchid).